Consider the following 436-residue polypeptide: Phosphomethylpyrimidine synthase (436 aa).

Residues asparagine 69, methionine 98, tyrosine 127, histidine 163, serine 185–glycine 187, aspartate 226–arginine 229, and glutamate 265 each bind substrate. A Zn(2+)-binding site is contributed by histidine 269. Tyrosine 292 is a binding site for substrate. Histidine 333 serves as a coordination point for Zn(2+). [4Fe-4S] cluster-binding residues include cysteine 409, cysteine 412, and cysteine 416.

Belongs to the ThiC family. [4Fe-4S] cluster is required as a cofactor.

It catalyses the reaction 5-amino-1-(5-phospho-beta-D-ribosyl)imidazole + S-adenosyl-L-methionine = 4-amino-2-methyl-5-(phosphooxymethyl)pyrimidine + CO + 5'-deoxyadenosine + formate + L-methionine + 3 H(+). Its pathway is cofactor biosynthesis; thiamine diphosphate biosynthesis. Its function is as follows. Catalyzes the synthesis of the hydroxymethylpyrimidine phosphate (HMP-P) moiety of thiamine from aminoimidazole ribotide (AIR) in a radical S-adenosyl-L-methionine (SAM)-dependent reaction. This is Phosphomethylpyrimidine synthase from Clostridium acetobutylicum (strain ATCC 824 / DSM 792 / JCM 1419 / IAM 19013 / LMG 5710 / NBRC 13948 / NRRL B-527 / VKM B-1787 / 2291 / W).